The primary structure comprises 101 residues: Small ribosomal subunit protein uS14 (101 aa).

The interval 1–20 (MAKTSAVNRNKMRERMASRD) is disordered. The segment covering 11-20 (KMRERMASRD) has biased composition (basic and acidic residues).

The protein belongs to the universal ribosomal protein uS14 family. As to quaternary structure, part of the 30S ribosomal subunit. Contacts proteins S3 and S10.

Binds 16S rRNA, required for the assembly of 30S particles and may also be responsible for determining the conformation of the 16S rRNA at the A site. This Granulibacter bethesdensis (strain ATCC BAA-1260 / CGDNIH1) protein is Small ribosomal subunit protein uS14.